The primary structure comprises 275 residues: Nuclear egress protein 2 (275 aa).

The Perinuclear space segment spans residues 1 to 251 (MAGLGKPYTG…GLKHLRIGPP (251 aa)). Positions 137–181 (KGRLGLDARPMMASMWISCFVRMPRVQLAFRFMGPEDAGRTRRIL) are interaction with NEC1. Residues 252-272 (ALVLAAGLVLGAAIWWVVGAG) form a helical membrane-spanning segment. Topologically, residues 273-275 (ARL) are nuclear.

The protein belongs to the herpesviridae NEC2 protein family. In terms of assembly, forms a heterohexameric complex with NEC1. Interacts with glycoprotein D; this interaction recruits glycoprotein D and glycoprotein M to the inner nuclear membrane. Phosphorylated by viral kinase US3.

The protein localises to the host nucleus inner membrane. Its function is as follows. Plays an essential role in virion nuclear egress, the first step of virion release from infected cell. Within the host nucleus, NEC1 interacts with the newly formed capsid through the vertexes and directs it to the inner nuclear membrane by associating with NEC2. Induces the budding of the capsid at the inner nuclear membrane as well as its envelopment into the perinuclear space. There, the NEC1/NEC2 complex promotes the fusion of the enveloped capsid with the outer nuclear membrane and the subsequent release of the viral capsid into the cytoplasm where it will reach the secondary budding sites in the host Golgi or trans-Golgi network. This is Nuclear egress protein 2 from Homo sapiens (Human).